The following is a 312-amino-acid chain: Glyoxylate/hydroxypyruvate reductase A (312 aa).

The active site involves R227. H275 (proton donor) is an active-site residue.

Belongs to the D-isomer specific 2-hydroxyacid dehydrogenase family. GhrA subfamily.

It is found in the cytoplasm. It catalyses the reaction glycolate + NADP(+) = glyoxylate + NADPH + H(+). It carries out the reaction (R)-glycerate + NAD(+) = 3-hydroxypyruvate + NADH + H(+). The enzyme catalyses (R)-glycerate + NADP(+) = 3-hydroxypyruvate + NADPH + H(+). Catalyzes the NADPH-dependent reduction of glyoxylate and hydroxypyruvate into glycolate and glycerate, respectively. This is Glyoxylate/hydroxypyruvate reductase A from Salmonella heidelberg (strain SL476).